Consider the following 534-residue polypeptide: Potential RNA-dependent RNA polymerase (534 aa).

In terms of domain architecture, RdRp catalytic spans 255 to 373 (DVVVCTDFSK…TYPGISAEDV (119 aa)).

It localises to the virion. It carries out the reaction RNA(n) + a ribonucleoside 5'-triphosphate = RNA(n+1) + diphosphate. Its function is as follows. RNA-directed RNA polymerase that is involved in both transcription and genome replication. This chain is Potential RNA-dependent RNA polymerase (Segment-2), found in Human picobirnavirus (strain Human/Thailand/Hy005102/-) (PBV).